Here is a 282-residue protein sequence, read N- to C-terminus: Predicted GPI-anchored protein 23 (282 aa).

The N-terminal stretch at 1-18 is a signal peptide; it reads MRVSTLVLSTSIIPIATA. The tract at residues 163-264 is disordered; sequence GQETSGAGSL…SSNSSSSAGM (102 aa). N-linked (GlcNAc...) asparagine glycosylation is found at N180, N192, and N257. Gly residues predominate over residues 186–216; that stretch reads GGSGSSNGTSSGSGSGSGAGVGSGSGSGSGS. A compositionally biased stretch (low complexity) spans 236-264; the sequence is LGISSSISQSTTRQLQTSGSSNSSSSAGM. S259 carries GPI-anchor amidated serine lipidation. A propeptide spans 260 to 282 (removed in mature form); sequence SSAGMGNVVVGMNAVALAALVLI.

It is found in the cell membrane. In terms of biological role, probable cell surface protein involved in the process of adhesion and early events of invasion. The chain is Predicted GPI-anchored protein 23 (PGA23) from Candida albicans (strain SC5314 / ATCC MYA-2876) (Yeast).